A 581-amino-acid chain; its full sequence is Kelch-like protein 30 (581 aa).

In terms of domain architecture, BTB spans 33–100 (ADVTLLVGDQ…VYTGRLTITQ (68 aa)). Residues 135–237 (CLGICEFGEQ…PRPCVQQLLA (103 aa)) enclose the BACK domain. 6 Kelch repeats span residues 280–327 (EEDE…ALNS), 328–378 (DVYV…ALNG), 379–423 (EIYA…GCQG), 425–472 (LYLV…ALNG), 474–514 (LYLI…PLGD), and 515–564 (LLYV…TIFL).

This Mus musculus (Mouse) protein is Kelch-like protein 30 (Klhl30).